A 358-amino-acid polypeptide reads, in one-letter code: E3 ubiquitin-protein ligase RFI2 (358 aa).

The tract at residues 1 to 34 (MAGAKDSGCDDDLRIAGGCDPGKRGNPEDSSSPV) is disordered. Residues 38 to 83 (CSICLESVLDDGTRSKAKLQCGHQFHLDCIGSAFNMKGAMQCPNCR) form an RING-type; atypical zinc finger. Disordered stretches follow at residues 174–201 (GPAA…DHFH) and 248–313 (SNQR…DQNV). The span at 187 to 201 (TDDHPWNSHSNDHFH) shows a compositional bias: basic and acidic residues. A compositionally biased stretch (polar residues) spans 248 to 266 (SNQRSSPAINSYQGSSTQM). Residues 299–309 (LPPPPPPPPMP) are compositionally biased toward pro residues.

It localises to the nucleus. It carries out the reaction S-ubiquitinyl-[E2 ubiquitin-conjugating enzyme]-L-cysteine + [acceptor protein]-L-lysine = [E2 ubiquitin-conjugating enzyme]-L-cysteine + N(6)-ubiquitinyl-[acceptor protein]-L-lysine.. The protein operates within protein modification; protein ubiquitination. Functionally, mediates phytochrome (phyA and phyB)-controlled seedling deetiolation responses such as hypocotyl elongation in response to red and far-red light. Required for light-induced expression of LHCB3 and CHALCONE SYNTHASE (CHS). Negatively regulates CONSTANS (CO) and FLOWERING LOCUS T (FT) expression and photoperiodic flowering. This Arabidopsis thaliana (Mouse-ear cress) protein is E3 ubiquitin-protein ligase RFI2.